The sequence spans 479 residues: Poly(A) polymerase catalytic subunit (479 aa).

Active-site residues include aspartate 202 and aspartate 204. Aspartate 202, aspartate 204, and aspartate 253 together coordinate Ca(2+).

The protein belongs to the poxviridae poly(A) polymerase catalytic subunit family. In terms of assembly, heterodimer of a large (catalytic) subunit and a small (regulatory) subunit.

It carries out the reaction RNA(n) + ATP = RNA(n)-3'-adenine ribonucleotide + diphosphate. In terms of biological role, polymerase that creates the 3'-poly(A) tail of mRNA's. This chain is Poly(A) polymerase catalytic subunit (OPG063), found in Homo sapiens (Human).